The sequence spans 370 residues: 4-hydroxy-3-methylbut-2-en-1-yl diphosphate synthase (flavodoxin) (370 aa).

Residues Cys268, Cys271, Cys303, and Glu310 each contribute to the [4Fe-4S] cluster site.

It belongs to the IspG family. It depends on [4Fe-4S] cluster as a cofactor.

The catalysed reaction is (2E)-4-hydroxy-3-methylbut-2-enyl diphosphate + oxidized [flavodoxin] + H2O + 2 H(+) = 2-C-methyl-D-erythritol 2,4-cyclic diphosphate + reduced [flavodoxin]. It participates in isoprenoid biosynthesis; isopentenyl diphosphate biosynthesis via DXP pathway; isopentenyl diphosphate from 1-deoxy-D-xylulose 5-phosphate: step 5/6. Converts 2C-methyl-D-erythritol 2,4-cyclodiphosphate (ME-2,4cPP) into 1-hydroxy-2-methyl-2-(E)-butenyl 4-diphosphate. The protein is 4-hydroxy-3-methylbut-2-en-1-yl diphosphate synthase (flavodoxin) of Bacillus pumilus (strain SAFR-032).